The following is a 333-amino-acid chain: tRNA-dihydrouridine(16) synthase (333 aa).

FMN-binding positions include 19 to 21 (PMQ) and glutamine 80. Catalysis depends on cysteine 110, which acts as the Proton donor. Residues lysine 151, 211–213 (NGD), and 235–236 (GR) each bind FMN.

Belongs to the Dus family. DusC subfamily. Requires FMN as cofactor.

The catalysed reaction is 5,6-dihydrouridine(16) in tRNA + NADP(+) = uridine(16) in tRNA + NADPH + H(+). It carries out the reaction 5,6-dihydrouridine(16) in tRNA + NAD(+) = uridine(16) in tRNA + NADH + H(+). Functionally, catalyzes the synthesis of 5,6-dihydrouridine (D), a modified base found in the D-loop of most tRNAs, via the reduction of the C5-C6 double bond in target uridines. Specifically modifies U16 in tRNAs. This Neisseria meningitidis serogroup B (strain ATCC BAA-335 / MC58) protein is tRNA-dihydrouridine(16) synthase.